The following is a 149-amino-acid chain: MIITEIIGNIHEQPELRTHHAETITLVDDALTKRIQRLVSDHGSELGLRLPSGHPPLRDGDVLHSDGENSILIAVAPTDVLMIRPGTLRDMAFVAHSLGNRHLPAQFDGDVMIVRYDNTVVDFLEHYGVRYERRSTVMPTPFRHSEHTH.

It belongs to the UreE family.

The protein localises to the cytoplasm. Functionally, involved in urease metallocenter assembly. Binds nickel. Probably functions as a nickel donor during metallocenter assembly. The protein is Urease accessory protein UreE of Corynebacterium efficiens (strain DSM 44549 / YS-314 / AJ 12310 / JCM 11189 / NBRC 100395).